A 628-amino-acid polypeptide reads, in one-letter code: DEAD-box ATP-dependent RNA helicase 9 (628 aa).

Residues 98–126 (LEVAKLGISPKIVSQLASRGITKLFPIQR) carry the Q motif motif. Positions 129-302 (LEPAMQGKDM…QKYLKNPVTI (174 aa)) constitute a Helicase ATP-binding domain. 142–149 (AKTGTGKT) serves as a coordination point for ATP. The DEAD box signature appears at 250–253 (DEAD). The Helicase C-terminal domain occupies 331 to 478 (VLGELIKEHA…KINVEGSDLM (148 aa)). 2 disordered regions span residues 496–548 (GSYG…SGFG) and 571–628 (SGFG…FGSS). Residues 500–509 (RRGSFGSSSS) are compositionally biased toward low complexity. A compositionally biased stretch (gly residues) spans 510–548 (RGGGFGDSGFGRSGGGFGRSGGGGFGRSSGGGFGDSGFG).

Belongs to the DEAD box helicase family. DDX21/DDX50 subfamily.

It catalyses the reaction ATP + H2O = ADP + phosphate + H(+). This is DEAD-box ATP-dependent RNA helicase 9 from Oryza sativa subsp. japonica (Rice).